Consider the following 120-residue polypeptide: Small ribosomal subunit protein uS13 (120 aa).

The interval 92 to 120 (RRGLPCRGQRTRTNARTRKGPRKPIAGKK) is disordered.

This sequence belongs to the universal ribosomal protein uS13 family. Part of the 30S ribosomal subunit. Forms a loose heterodimer with protein S19. Forms two bridges to the 50S subunit in the 70S ribosome.

Located at the top of the head of the 30S subunit, it contacts several helices of the 16S rRNA. In the 70S ribosome it contacts the 23S rRNA (bridge B1a) and protein L5 of the 50S subunit (bridge B1b), connecting the 2 subunits; these bridges are implicated in subunit movement. Contacts the tRNAs in the A and P-sites. In Laribacter hongkongensis (strain HLHK9), this protein is Small ribosomal subunit protein uS13.